Consider the following 203-residue polypeptide: Transmembrane protein 269 (203 aa).

3 helical membrane-spanning segments follow: residues 60-80, 124-144, and 157-177; these read GLASALLLGVDGLLSGILAII, FILCCMASLMILFMMDQSYYP, and LVYIGGVIMLFFSPLSLSAFY.

It is found in the membrane. This is Transmembrane protein 269 from Homo sapiens (Human).